We begin with the raw amino-acid sequence, 213 residues long: Proton-translocating ferredoxin:NAD(+) oxidoreductase complex subunit E (213 aa).

The next 6 membrane-spanning stretches (helical) occupy residues 11–31 (GLIA…ALAT), 39–59 (FTMG…VSII), 69–89 (VPVY…VMQA), 93–113 (LLYK…IILA), 128–148 (FFDG…IGMI), and 170–190 (ALIM…VAIV).

It belongs to the NqrDE/RnfAE family. As to quaternary structure, the complex is composed of six subunits: RnfA, RnfB, RnfC, RnfD, RnfE and RnfG.

The protein resides in the cell membrane. Its function is as follows. Part of a membrane-bound complex that couples electron transfer with translocation of ions across the membrane. Couples electron transfer from reduced ferredoxin to NAD(+) with translocation of H(+) out of the cell. Essential for energy conservation during autotrophic growth. Contributes to ATP synthesis during heterotrophic growth. The protein is Proton-translocating ferredoxin:NAD(+) oxidoreductase complex subunit E of Clostridium ljungdahlii (strain ATCC 55383 / DSM 13528 / PETC).